The chain runs to 119 residues: Large ribosomal subunit protein uL24 (119 aa).

This sequence belongs to the universal ribosomal protein uL24 family. In terms of assembly, part of the 50S ribosomal subunit.

In terms of biological role, one of two assembly initiator proteins, it binds directly to the 5'-end of the 23S rRNA, where it nucleates assembly of the 50S subunit. Its function is as follows. One of the proteins that surrounds the polypeptide exit tunnel on the outside of the subunit. The sequence is that of Large ribosomal subunit protein uL24 from Sulfurihydrogenibium sp. (strain YO3AOP1).